The sequence spans 253 residues: MRILLSNDDGIHAPGIQTLAKALREFADVQVVAPDRNRSGASNSLTLESSLRTFTFDNGDIAVQMGTPTDCVYLGVNALMRPRPDIVVSGINAGPNLGDDVIYSGTVAAAMEGRHLGFPALAVSLNGYQHYDTAAAVTCALLRGLSREPLRTGRILNVNVPDLPLAQIKGIRVTRCGSRHPADKVIPQEDPRGNTLYWIGPPGDKYDAGPDTDFAAVDEGYVSVTPLHVDLTAHSAHDVVSDWLDSVGVGTQW.

The a divalent metal cation site is built by Asp-8, Asp-9, Ser-39, and Asn-92.

This sequence belongs to the SurE nucleotidase family. A divalent metal cation is required as a cofactor.

The protein resides in the cytoplasm. It catalyses the reaction a ribonucleoside 5'-phosphate + H2O = a ribonucleoside + phosphate. It carries out the reaction a ribonucleoside 3'-phosphate + H2O = a ribonucleoside + phosphate. The enzyme catalyses [phosphate](n) + H2O = [phosphate](n-1) + phosphate + H(+). Nucleotidase with a broad substrate specificity as it can dephosphorylate various ribo- and deoxyribonucleoside 5'-monophosphates and ribonucleoside 3'-monophosphates with highest affinity to 3'-AMP. Also hydrolyzes polyphosphate (exopolyphosphatase activity) with the preference for short-chain-length substrates (P20-25). Might be involved in the regulation of dNTP and NTP pools, and in the turnover of 3'-mononucleotides produced by numerous intracellular RNases (T1, T2, and F) during the degradation of various RNAs. This Salmonella arizonae (strain ATCC BAA-731 / CDC346-86 / RSK2980) protein is 5'/3'-nucleotidase SurE.